The following is a 392-amino-acid chain: Multidrug resistance protein MdtL (392 aa).

Transmembrane regions (helical) follow at residues 4–24 (FLLC…MYLV), 38–58 (AQLH…MLFA), 69–89 (PVAI…AQVH), 95–115 (LIGR…AFAI), 131–151 (LLNG…HLIM), 158–178 (SLFY…VFIL), 209–229 (LLIT…SPVL), 246–266 (ALMA…LSLF), 270–290 (TLML…SLAT), 294–314 (VTLI…GVAM), 331–351 (VLGI…AIIG), and 357–377 (MLIG…LVVT).

Belongs to the major facilitator superfamily. DHA1 family. MdtL (TC 2.A.1.2.22) subfamily.

It is found in the cell inner membrane. The chain is Multidrug resistance protein MdtL from Klebsiella pneumoniae subsp. pneumoniae (strain ATCC 700721 / MGH 78578).